The sequence spans 147 residues: Cyanate hydratase (147 aa).

Residues Arg-88, Glu-91, and Ser-114 contribute to the active site.

Belongs to the cyanase family.

The catalysed reaction is cyanate + hydrogencarbonate + 3 H(+) = NH4(+) + 2 CO2. In terms of biological role, catalyzes the reaction of cyanate with bicarbonate to produce ammonia and carbon dioxide. This is Cyanate hydratase from Polynucleobacter asymbioticus (strain DSM 18221 / CIP 109841 / QLW-P1DMWA-1) (Polynucleobacter necessarius subsp. asymbioticus).